The chain runs to 140 residues: Oocyte-expressed protein homolog (140 aa).

One can recognise a KH; atypical domain in the interval 40-101 (PLVFFLEAWL…AVQRQVKSVL (62 aa)).

The protein belongs to the KHDC1 family. As to quaternary structure, component of the subcortical maternal complex (SCMC), at least composed of NLRP5, KHDC3, OOEP, and TLE6. Within the complex, interacts with NLRP5, KHDC3 and TLE6. As part of the SCMC interacts with the SCMC-associated protein NLRP4F. The SCMC may facilitate translocation of its components between the nuclear and cytoplasmic compartments. Forms a scaffold complex with KHDC3/FILIA, and interacts with BLM and TRIM25 at DNA replication forks.

The protein resides in the cytoplasm. It localises to the nucleus. Its function is as follows. Component of the subcortical maternal complex (SCMC), a multiprotein complex that plays a key role in early embryonic development. The SCMC complex is a structural constituent of cytoplasmic lattices, which consist in fibrous structures found in the cytoplasm of oocytes and preimplantation embryos. They are required to store maternal proteins critical for embryonic development, such as proteins that control epigenetic reprogramming of the preimplantation embryo, and prevent their degradation or activation. As part of the OOEP-KHDC3 scaffold, recruits BLM and TRIM25 to DNA replication forks, thereby promoting the ubiquitination of BLM by TRIM25, enhancing BLM retainment at replication forks and therefore promoting stalled replication fork restart. Positively regulates the homologous recombination-mediated DNA double-strand break (DSB) repair pathway by regulating ATM activation and RAD51 recruitment to DSBs in oocytes. Thereby contributes to oocyte survival and the resumption and completion of meiosis. The polypeptide is Oocyte-expressed protein homolog (OOEP) (Bos taurus (Bovine)).